The sequence spans 188 residues: UPF0301 protein XOO1309 (188 aa).

This sequence belongs to the UPF0301 (AlgH) family.

The polypeptide is UPF0301 protein XOO1309 (Xanthomonas oryzae pv. oryzae (strain MAFF 311018)).